The primary structure comprises 665 residues: Translation factor GUF1 homolog, mitochondrial (665 aa).

The transit peptide at methionine 1–leucine 35 directs the protein to the mitochondrion. The segment at arginine 34–serine 53 is disordered. The 189-residue stretch at glutamate 61–proline 249 folds into the tr-type G domain. Residues alanine 70 to serine 77, aspartate 142 to histidine 146, and asparagine 196 to aspartate 199 contribute to the GTP site.

It belongs to the TRAFAC class translation factor GTPase superfamily. Classic translation factor GTPase family. LepA subfamily.

The protein resides in the mitochondrion inner membrane. It carries out the reaction GTP + H2O = GDP + phosphate + H(+). Functionally, promotes mitochondrial protein synthesis. May act as a fidelity factor of the translation reaction, by catalyzing a one-codon backward translocation of tRNAs on improperly translocated ribosomes. Binds to mitochondrial ribosomes in a GTP-dependent manner. This is Translation factor GUF1 homolog, mitochondrial from Sorghum bicolor (Sorghum).